The following is a 373-amino-acid chain: S-adenosylmethionine:tRNA ribosyltransferase-isomerase (373 aa).

It belongs to the QueA family. As to quaternary structure, monomer.

The protein resides in the cytoplasm. It carries out the reaction 7-aminomethyl-7-carbaguanosine(34) in tRNA + S-adenosyl-L-methionine = epoxyqueuosine(34) in tRNA + adenine + L-methionine + 2 H(+). The protein operates within tRNA modification; tRNA-queuosine biosynthesis. Transfers and isomerizes the ribose moiety from AdoMet to the 7-aminomethyl group of 7-deazaguanine (preQ1-tRNA) to give epoxyqueuosine (oQ-tRNA). This is S-adenosylmethionine:tRNA ribosyltransferase-isomerase from Rhizobium etli (strain CIAT 652).